A 97-amino-acid chain; its full sequence is Stefin-1 (97 aa).

The Secondary area of contact motif lies at 46–50 (QVVAG).

It belongs to the cystatin family.

The protein localises to the cytoplasm. In terms of biological role, this is an intracellular thiol proteinase inhibitor. The protein is Stefin-1 (Stfa1) of Mus musculus (Mouse).